The primary structure comprises 380 residues: Glucose-1-phosphate adenylyltransferase (380 aa).

Alpha-D-glucose 1-phosphate contacts are provided by residues Y99, G164, 179-180 (EK), and S190.

This sequence belongs to the bacterial/plant glucose-1-phosphate adenylyltransferase family. In terms of assembly, homotetramer.

It carries out the reaction alpha-D-glucose 1-phosphate + ATP + H(+) = ADP-alpha-D-glucose + diphosphate. Its pathway is glycan biosynthesis; glycogen biosynthesis. In terms of biological role, involved in the biosynthesis of ADP-glucose, a building block required for the elongation reactions to produce glycogen. Catalyzes the reaction between ATP and alpha-D-glucose 1-phosphate (G1P) to produce pyrophosphate and ADP-Glc. This is Glucose-1-phosphate adenylyltransferase from Bacillus subtilis (strain 168).